A 279-amino-acid polypeptide reads, in one-letter code: Large ribosomal subunit protein uL5c (279 aa).

2 disordered regions span residues 1–23 and 40–63; these read MAAT…TASS and LRVA…SPSG. The N-terminal 43 residues, 1–43, are a transit peptide targeting the chloroplast; the sequence is MAATAVTLPSSPAPFPVTTTASSSRNVRLLLRSPPPRRALRVA. The segment covering 41 to 50 has biased composition (low complexity); it reads RVAASAAADA. The span at 51-60 shows a compositional bias: pro residues; that stretch reads PPKPAPPPTS.

The protein belongs to the universal ribosomal protein uL5 family. In terms of assembly, part of the 50S ribosomal subunit; contacts the 5S rRNA.

Its subcellular location is the plastid. It localises to the chloroplast. Binds 5S rRNA, forms part of the central protuberance of the 50S subunit. This is Large ribosomal subunit protein uL5c (RPL5) from Oryza sativa subsp. japonica (Rice).